We begin with the raw amino-acid sequence, 307 residues long: Dioxygenase swnH1 (307 aa).

3 residues coordinate Fe cation: histidine 149, aspartate 151, and histidine 227.

It belongs to the PhyH family. In terms of assembly, homodimer. Requires Fe cation as cofactor.

It participates in mycotoxin biosynthesis. Its function is as follows. Dioxygenase; part of the gene cluster that mediates the biosynthesis of swainsonine (SW), a cytotoxic fungal alkaloid and a potential cancer therapy drug. Swainsonine production occurs via a multibranched pathway and is dispensable for fungal colonization of plants and infection of insect hosts. The first step of swainsonine biosynthesis is the production of the precursor pipecolic acid (PA) via conversion of L-lysine (Lys) to 1-piperideine-6-carboxylate (P6C) by the aminotransferase swnA, the latter being further reduced to PA by the reductase swnR. The PKS-NRPS hybrid synthetase swnK uptakes and condensates PA and malonyl-CoA with and without skipping of the ketoreductase (KR) domain in order to produce 3 intermediates, 1-oxoindolizidine, (1S)-1-hydroxyindolizin, and (1R)-1-hydroxyindolizine; with the transisomer (1S)-1-hydroxyindolizin being predominant. The terminal thioester reductase (TE) domain of swnK is involved in reduction of the thioester bond to release the intermediate aldehydes. The oxidoreductase swnN could contribute to the reduction of 1-oxoindolizidine to (1S)-1-hydroxyindolizin and (1R)-1-hydroxyindolizine, contributing to the major route of SW production. The dioxygenase swnH2 would be responsible for the oxidization of (1R)-1-hydroxyindolizine into (1R,2S)-1,2-dihydroxyindolizine and of (1S)-1-hydroxyindolizin to yield both (1R,2S)-1,2-dihydroxyindolizine and (1S,2S)-1,2-dihydroxyindolizine. The dioxygenase swnH1 then performs the conversion of the 1,2-dihydroxyindolizine epimers to SW. This chain is Dioxygenase swnH1, found in Arthroderma benhamiae (strain ATCC MYA-4681 / CBS 112371) (Trichophyton mentagrophytes).